We begin with the raw amino-acid sequence, 74 residues long: MQKATVLLLALLLLLPLSTAQDAEGSQEDAAQREVDIATRCGGTGDSCNEPAGELCCRRLKCVNSRCCPTTDGC.

A signal peptide spans 1–20 (MQKATVLLLALLLLLPLSTA). Residues 21–40 (QDAEGSQEDAAQREVDIATR) constitute a propeptide that is removed on maturation. P51 carries the 4-hydroxyproline modification.

Post-translationally, contains disulfide bonds. In terms of tissue distribution, expressed by the venom gland.

The protein localises to the secreted. The polypeptide is Conotoxin ca17a (Conus caracteristicus (Characteristic cone)).